A 392-amino-acid chain; its full sequence is Selenide, water dikinase 1 (392 aa).

Position 2 is an N-acetylserine (Ser2). The active site involves Cys31. Residues Lys32, 67–69, Asp87, Asp110, and 161–164 each bind ATP; these read GMD and GGQT. Asp69 serves as a coordination point for Mg(2+). Mg(2+) is bound at residue Asp110. Asp265 provides a ligand contact to Mg(2+).

The protein belongs to the selenophosphate synthase 1 family. Class II subfamily. As to quaternary structure, homodimer. Mg(2+) is required as a cofactor.

It is found in the cell membrane. It localises to the nucleus membrane. The catalysed reaction is hydrogenselenide + ATP + H2O = selenophosphate + AMP + phosphate + 2 H(+). Functionally, synthesizes selenophosphate from selenide and ATP. The chain is Selenide, water dikinase 1 (Sephs1) from Mus musculus (Mouse).